The primary structure comprises 168 residues: Crossover junction endodeoxyribonuclease RuvC (168 aa).

Catalysis depends on residues Asp9, Glu69, and Asp141. Positions 9, 69, and 141 each coordinate Mg(2+).

The protein belongs to the RuvC family. Homodimer which binds Holliday junction (HJ) DNA. The HJ becomes 2-fold symmetrical on binding to RuvC with unstacked arms; it has a different conformation from HJ DNA in complex with RuvA. In the full resolvosome a probable DNA-RuvA(4)-RuvB(12)-RuvC(2) complex forms which resolves the HJ. The cofactor is Mg(2+).

Its subcellular location is the cytoplasm. The catalysed reaction is Endonucleolytic cleavage at a junction such as a reciprocal single-stranded crossover between two homologous DNA duplexes (Holliday junction).. The RuvA-RuvB-RuvC complex processes Holliday junction (HJ) DNA during genetic recombination and DNA repair. Endonuclease that resolves HJ intermediates. Cleaves cruciform DNA by making single-stranded nicks across the HJ at symmetrical positions within the homologous arms, yielding a 5'-phosphate and a 3'-hydroxyl group; requires a central core of homology in the junction. The consensus cleavage sequence is 5'-(A/T)TT(C/G)-3'. Cleavage occurs on the 3'-side of the TT dinucleotide at the point of strand exchange. HJ branch migration catalyzed by RuvA-RuvB allows RuvC to scan DNA until it finds its consensus sequence, where it cleaves and resolves the cruciform DNA. This is Crossover junction endodeoxyribonuclease RuvC from Bdellovibrio bacteriovorus (strain ATCC 15356 / DSM 50701 / NCIMB 9529 / HD100).